The chain runs to 230 residues: Uracil-DNA glycosylase (230 aa).

D72 (proton acceptor) is an active-site residue.

This sequence belongs to the uracil-DNA glycosylase (UDG) superfamily. UNG family.

The protein localises to the cytoplasm. The catalysed reaction is Hydrolyzes single-stranded DNA or mismatched double-stranded DNA and polynucleotides, releasing free uracil.. Excises uracil residues from the DNA which can arise as a result of misincorporation of dUMP residues by DNA polymerase or due to deamination of cytosine. In Wolinella succinogenes (strain ATCC 29543 / DSM 1740 / CCUG 13145 / JCM 31913 / LMG 7466 / NCTC 11488 / FDC 602W) (Vibrio succinogenes), this protein is Uracil-DNA glycosylase.